The chain runs to 466 residues: NADPH:adrenodoxin oxidoreductase, mitochondrial (466 aa).

FAD contacts are provided by alanine 40, glutamate 61, leucine 69, and leucine 105. NADP(+) contacts are provided by residues 176 to 179, 220 to 221, and glutamate 232; these read QGNV and RR. FAD-binding positions include tryptophan 379 and 386–388; that span reads GVI. Glycine 386 provides a ligand contact to NADP(+).

This sequence belongs to the ferredoxin--NADP reductase type 1 family. FAD serves as cofactor. Expressed predominantly in prothoracic gland of the larval ring gland and nurse cells of the adult ovary. Low expression is all adult tissues examined.

Its subcellular location is the mitochondrion inner membrane. It catalyses the reaction 2 reduced [adrenodoxin] + NADP(+) + H(+) = 2 oxidized [adrenodoxin] + NADPH. It participates in steroid metabolism; cholesterol metabolism. In terms of biological role, required for synthesis of steroid hormones, for olfactory sensory behavior and completion of the second larval molt (a steroid mediated developmental transition) and pupariation. The sequence is that of NADPH:adrenodoxin oxidoreductase, mitochondrial (dare) from Drosophila melanogaster (Fruit fly).